We begin with the raw amino-acid sequence, 286 residues long: Tryptophan 2,3-dioxygenase (286 aa).

Substrate contacts are provided by residues 53 to 57, Tyr115, and Arg119; that span reads FIVQH. His242 is a binding site for heme. Thr256 contacts substrate.

It belongs to the tryptophan 2,3-dioxygenase family. As to quaternary structure, homotetramer. The cofactor is heme.

The catalysed reaction is L-tryptophan + O2 = N-formyl-L-kynurenine. It functions in the pathway amino-acid degradation; L-tryptophan degradation via kynurenine pathway; L-kynurenine from L-tryptophan: step 1/2. Its function is as follows. Heme-dependent dioxygenase that catalyzes the oxidative cleavage of the L-tryptophan (L-Trp) pyrrole ring and converts L-tryptophan to N-formyl-L-kynurenine. Catalyzes the oxidative cleavage of the indole moiety. This Kineococcus radiotolerans (strain ATCC BAA-149 / DSM 14245 / SRS30216) protein is Tryptophan 2,3-dioxygenase.